Here is a 142-residue protein sequence, read N- to C-terminus: Large ribosomal subunit protein uL11 (142 aa).

This sequence belongs to the universal ribosomal protein uL11 family. As to quaternary structure, part of the ribosomal stalk of the 50S ribosomal subunit. Interacts with L10 and the large rRNA to form the base of the stalk. L10 forms an elongated spine to which L12 dimers bind in a sequential fashion forming a multimeric L10(L12)X complex. In terms of processing, one or more lysine residues are methylated.

In terms of biological role, forms part of the ribosomal stalk which helps the ribosome interact with GTP-bound translation factors. This chain is Large ribosomal subunit protein uL11, found in Mesoplasma florum (strain ATCC 33453 / NBRC 100688 / NCTC 11704 / L1) (Acholeplasma florum).